Here is a 770-residue protein sequence, read N- to C-terminus: MSSDTGSEYLDEEIRGDELGPSIDDNALAAAASAARLPFDRPTDHELAFFPELWEHKTAVEVFLLLRNSTLATWQYNPLKECTALDVRNNVFPPFNSDLDLIQNIVHYLSRHGLINFGRYVRSTKISRFLVRDRRSVIVIGAGAAGISAATQLESFGFDVIVLEARNCIGGRIHSFKSKSGEIMETGGDTLRKIEDSPMATLLHQVNFEEHGVFDFTSVFVEGRPLNEEKIHLFLDHYKSAHGALNYQAHQCEHRDDQGSFISRQQAYENLLSMCERGTLIKYYNFCKSLETVARAREHHFNQMKQLRMTALMAENQLKKMEEEGNLEQDPVLRRSLKRDIATSLEKFEEVADAFETADNHWQRLNEHPQAKQYMHPGSEFATFNFMLGFEEYLVGAQLEKVQFSCDSMQNKENGVAARLTEGIAELLTQLSEKRKLDIRLKHRVLDIDYSGFEHVLLKVQRENGDIEEMKAAFVVSTLPIGVLKKTIIADERAPTFTPSLPDKKVEAIRNIGCGSVNKCILEFDRVFWTANGGRNQFVTVSPNIKTRGSMNIWSSVPGSKVLCTYIVGEEAMLELPDDVIIQNAMINLQKAFGNNCPRAPISAHITRWHDDELAFGSGAFMSLRTETTSFDDVMEPLKTSDGMSRVYFAGEHTCSSYTSTIQGAWMSGARAAADISNDHIGIGFVDISGTRGQRGDEEEELLIEVDIDGKIPEKDENEAVADIPNAPNAPNAQKPEEIPKIAEEIELVAEAEKAEKAEVQLEPLVPTVE.

The disordered stretch occupies residues 1–21 (MSSDTGSEYLDEEIRGDELGP). One can recognise an SWIRM domain in the interval 28-126 (LAAAASAARL…FGRYVRSTKI (99 aa)). Position 137–165 (137–165 (VIVIGAGAAGISAATQLESFGFDVIVLEA)) interacts with FAD. The disordered stretch occupies residues 718 to 739 (NEAVADIPNAPNAPNAQKPEEI).

Belongs to the flavin monoamine oxidase family. Probably part of a large repressor complex. Interacts with CoREST protein spr-1. Interacts with chromobox protein homolog hpl-1. It depends on FAD as a cofactor.

Its subcellular location is the nucleus. The catalysed reaction is N(6),N(6)-dimethyl-L-lysyl(4)-[histone H3] + 2 A + 2 H2O = L-lysyl(4)-[histone H3] + 2 formaldehyde + 2 AH2. Functionally, histone demethylase that specifically demethylates 'Lys-4' of histone H3, a specific tag for epigenetic transcriptional activation, thereby acting as a corepressor. Acts by oxidizing the substrate by FAD to generate the corresponding imine that is subsequently hydrolyzed. Demethylates both mono- and di-methylated 'Lys-4' of histone H3. May be involved in H3 demethylation in mitotic cells including gut and embryonic cells. Participates in the transcriptional repression of the presenilin protein hop-1. May act via the formation of a multiprotein complex that remodel or modify the chromatin. Together with met-2, set-17 and set-26, required for transgenerational fertility. Plays a role in developmental growth and lifespan regulation in response to ultraviolet-induced damage. In Caenorhabditis elegans, this protein is Lysine-specific histone demethylase 1.